A 262-amino-acid polypeptide reads, in one-letter code: Triosephosphate isomerase (262 aa).

13 to 15 (NWK) provides a ligand contact to substrate. The active-site Electrophile is the H103. The Proton acceptor role is filled by E175. Substrate contacts are provided by residues G181, S221, and 242-243 (GG).

It belongs to the triosephosphate isomerase family. In terms of assembly, homodimer.

The protein resides in the cytoplasm. It carries out the reaction D-glyceraldehyde 3-phosphate = dihydroxyacetone phosphate. The protein operates within carbohydrate biosynthesis; gluconeogenesis. Its pathway is carbohydrate degradation; glycolysis; D-glyceraldehyde 3-phosphate from glycerone phosphate: step 1/1. Functionally, involved in the gluconeogenesis. Catalyzes stereospecifically the conversion of dihydroxyacetone phosphate (DHAP) to D-glyceraldehyde-3-phosphate (G3P). The polypeptide is Triosephosphate isomerase (Corynebacterium efficiens (strain DSM 44549 / YS-314 / AJ 12310 / JCM 11189 / NBRC 100395)).